A 415-amino-acid chain; its full sequence is Tyrosine--tRNA ligase (415 aa).

Tyrosine 34 contacts L-tyrosine. The 'HIGH' region signature appears at 39 to 48 (PSADSLHLGN). L-tyrosine is bound by residues tyrosine 162 and glutamine 166. The 'KMSKS' region signature appears at 224–228 (KFGKS). An ATP-binding site is contributed by lysine 227. The S4 RNA-binding domain maps to 346–413 (IKIIDLLNLA…KRNYFLIVWN (68 aa)).

Belongs to the class-I aminoacyl-tRNA synthetase family. TyrS type 1 subfamily. Homodimer.

It is found in the cytoplasm. The catalysed reaction is tRNA(Tyr) + L-tyrosine + ATP = L-tyrosyl-tRNA(Tyr) + AMP + diphosphate + H(+). Catalyzes the attachment of tyrosine to tRNA(Tyr) in a two-step reaction: tyrosine is first activated by ATP to form Tyr-AMP and then transferred to the acceptor end of tRNA(Tyr). The sequence is that of Tyrosine--tRNA ligase from Ureaplasma urealyticum serovar 10 (strain ATCC 33699 / Western).